We begin with the raw amino-acid sequence, 469 residues long: Adenosylhomocysteinase (469 aa).

Substrate-binding residues include Thr63, Asp139, and Glu164. 165–167 (TTT) is a binding site for NAD(+). Substrate contacts are provided by Lys194 and Asp198. Residues Asn199, 228 to 233 (GYGDVG), Glu251, Asn300, 321 to 323 (IGH), and Asn375 contribute to the NAD(+) site.

It belongs to the adenosylhomocysteinase family. NAD(+) serves as cofactor.

The protein localises to the cytoplasm. It catalyses the reaction S-adenosyl-L-homocysteine + H2O = L-homocysteine + adenosine. It functions in the pathway amino-acid biosynthesis; L-homocysteine biosynthesis; L-homocysteine from S-adenosyl-L-homocysteine: step 1/1. May play a key role in the regulation of the intracellular concentration of adenosylhomocysteine. This Pseudomonas fluorescens (strain ATCC BAA-477 / NRRL B-23932 / Pf-5) protein is Adenosylhomocysteinase.